Consider the following 65-residue polypeptide: UPF0434 protein CC_0108 (65 aa).

Belongs to the UPF0434 family.

In Caulobacter vibrioides (strain ATCC 19089 / CIP 103742 / CB 15) (Caulobacter crescentus), this protein is UPF0434 protein CC_0108.